The primary structure comprises 119 residues: Ribonuclease pancreatic (119 aa).

Pyrrolidone carboxylic acid is present on glutamine 1. Histidine 10 (proton acceptor) is an active-site residue. Cystine bridges form between cysteine 25-cysteine 80, cysteine 39-cysteine 91, and cysteine 57-cysteine 106. 40–44 contacts substrate; that stretch reads KTRNT. Histidine 113 (proton donor) is an active-site residue.

This sequence belongs to the pancreatic ribonuclease family. Monomer. Interacts with and forms tight 1:1 complexes with RNH1. Dimerization of two such complexes may occur. Interaction with RNH1 inhibits this protein. Pancreas.

The protein resides in the secreted. The enzyme catalyses an [RNA] containing cytidine + H2O = an [RNA]-3'-cytidine-3'-phosphate + a 5'-hydroxy-ribonucleotide-3'-[RNA].. It catalyses the reaction an [RNA] containing uridine + H2O = an [RNA]-3'-uridine-3'-phosphate + a 5'-hydroxy-ribonucleotide-3'-[RNA].. Functionally, endonuclease that catalyzes the cleavage of RNA on the 3' side of pyrimidine nucleotides. Acts on single-stranded and double-stranded RNA. The polypeptide is Ribonuclease pancreatic (Iguana iguana (Common iguana)).